A 50-amino-acid polypeptide reads, in one-letter code: Large ribosomal subunit protein bL33B (50 aa).

Belongs to the bacterial ribosomal protein bL33 family.

The protein is Large ribosomal subunit protein bL33B of Streptococcus agalactiae serotype V (strain ATCC BAA-611 / 2603 V/R).